The primary structure comprises 393 residues: Methylthioribose kinase (393 aa).

ATP is bound by residues asparagine 38, lysine 53, and 107-109; that span reads EDL. Aspartate 225 is a binding site for substrate. 242–244 contacts ATP; it reads DPE. Position 332 (arginine 332) interacts with substrate.

Belongs to the methylthioribose kinase family. As to quaternary structure, homodimer.

It carries out the reaction 5-(methylsulfanyl)-D-ribose + ATP = 5-(methylsulfanyl)-alpha-D-ribose 1-phosphate + ADP + H(+). It participates in amino-acid biosynthesis; L-methionine biosynthesis via salvage pathway; S-methyl-5-thio-alpha-D-ribose 1-phosphate from S-methyl-5'-thioadenosine (hydrolase route): step 2/2. Functionally, catalyzes the phosphorylation of methylthioribose into methylthioribose-1-phosphate. This is Methylthioribose kinase from Bacillus cereus (strain G9842).